Reading from the N-terminus, the 74-residue chain is Defensin (74 aa).

The first 21 residues, 1-21 (MRGIYICLVFVLVCGLVSGLA), serve as a signal peptide directing secretion. Positions 22-34 (DVPAESEMAHLRV) are excised as a propeptide. 3 disulfides stabilise this stretch: Cys-40-Cys-61, Cys-47-Cys-69, and Cys-51-Cys-71.

As to expression, expressed in the hemocytes, fat body and ovaries.

It is found in the secreted. Its function is as follows. Antibacterial peptide mostly active against Gram-positive bacteria. This chain is Defensin, found in Rhipicephalus microplus (Cattle tick).